The chain runs to 366 residues: Phenylalanine--tRNA ligase alpha subunit (366 aa).

Residue Glu264 participates in Mg(2+) binding.

This sequence belongs to the class-II aminoacyl-tRNA synthetase family. Phe-tRNA synthetase alpha subunit type 1 subfamily. Tetramer of two alpha and two beta subunits. The cofactor is Mg(2+).

It localises to the cytoplasm. The enzyme catalyses tRNA(Phe) + L-phenylalanine + ATP = L-phenylalanyl-tRNA(Phe) + AMP + diphosphate + H(+). This is Phenylalanine--tRNA ligase alpha subunit from Zymomonas mobilis subsp. mobilis (strain ATCC 31821 / ZM4 / CP4).